A 452-amino-acid chain; its full sequence is Maltoporin (452 aa).

Residues 1-25 (MMITLRKLPLAVAVAAGVMSAQAMA) form the signal peptide.

This sequence belongs to the porin LamB (TC 1.B.3) family. As to quaternary structure, homotrimer formed of three 18-stranded antiparallel beta-barrels, containing three independent channels.

The protein localises to the cell outer membrane. It catalyses the reaction beta-maltose(in) = beta-maltose(out). In terms of biological role, involved in the transport of maltose and maltodextrins. In Salmonella choleraesuis (strain SC-B67), this protein is Maltoporin.